The sequence spans 192 residues: UPF0312 protein PFLU_5725 (192 aa).

The first 23 residues, 1–23 (MLKKTLAALAIGTALLSAGQVMA), serve as a signal peptide directing secretion.

This sequence belongs to the UPF0312 family. Type 1 subfamily.

It localises to the periplasm. This Pseudomonas fluorescens (strain SBW25) protein is UPF0312 protein PFLU_5725.